The chain runs to 430 residues: Dihydrolipoyllysine-residue acetyltransferase component of pyruvate dehydrogenase complex (430 aa).

A Lipoyl-binding domain is found at 2–77 (AFEFRLPDIG…VVGDVIVKID (76 aa)). An N6-lipoyllysine modification is found at Lys-43. The segment at 80–122 (DAEDMQFKGHDDDSSSKEEPAKEEAPAEQAPVATQTEEVDENR) is disordered. Residues 84–104 (MQFKGHDDDSSSKEEPAKEEA) are compositionally biased toward basic and acidic residues. One can recognise a Peripheral subunit-binding (PSBD) domain in the interval 125 to 162 (KAMPSVRKYAREKGVNIKAVSGSGKNGRITKEDVDAYL). Positions 165–200 (GAPTASNESAASATSEEVAETPAAPAAVTLEGDFPE) are disordered. Low complexity predominate over residues 166-193 (APTASNESAASATSEEVAETPAAPAAVT). His-401 is an active-site residue.

This sequence belongs to the 2-oxoacid dehydrogenase family. As to quaternary structure, forms a 24-polypeptide structural core with octahedral symmetry. Requires (R)-lipoate as cofactor.

It carries out the reaction N(6)-[(R)-dihydrolipoyl]-L-lysyl-[protein] + acetyl-CoA = N(6)-[(R)-S(8)-acetyldihydrolipoyl]-L-lysyl-[protein] + CoA. Functionally, the pyruvate dehydrogenase complex catalyzes the overall conversion of pyruvate to acetyl-CoA and CO(2). It contains multiple copies of three enzymatic components: pyruvate dehydrogenase (E1), dihydrolipoamide acetyltransferase (E2) and lipoamide dehydrogenase (E3). The polypeptide is Dihydrolipoyllysine-residue acetyltransferase component of pyruvate dehydrogenase complex (pdhC) (Staphylococcus aureus (strain COL)).